A 126-amino-acid chain; its full sequence is UPF0235 protein C15orf40 homolog (126 aa).

Positions 1–33 are disordered; the sequence is MPKKAGATSKGKNQTKEPETPPPPTGPVATDSK. At S89 the chain carries Phosphoserine.

Belongs to the UPF0235 family.

The protein is UPF0235 protein C15orf40 homolog of Rattus norvegicus (Rat).